A 592-amino-acid polypeptide reads, in one-letter code: Aspartate--tRNA(Asp/Asn) ligase (592 aa).

Glu-175 contacts L-aspartate. The segment at 199 to 202 (QLFK) is aspartate. Position 221 (Arg-221) interacts with L-aspartate. ATP-binding positions include 221 to 223 (RDE) and Gln-230. His-450 lines the L-aspartate pocket. Glu-483 is an ATP binding site. Arg-490 provides a ligand contact to L-aspartate. 535–538 (GLDR) is an ATP binding site.

It belongs to the class-II aminoacyl-tRNA synthetase family. Type 1 subfamily. In terms of assembly, homodimer.

The protein localises to the cytoplasm. It carries out the reaction tRNA(Asx) + L-aspartate + ATP = L-aspartyl-tRNA(Asx) + AMP + diphosphate. Functionally, aspartyl-tRNA synthetase with relaxed tRNA specificity since it is able to aspartylate not only its cognate tRNA(Asp) but also tRNA(Asn). Reaction proceeds in two steps: L-aspartate is first activated by ATP to form Asp-AMP and then transferred to the acceptor end of tRNA(Asp/Asn). The chain is Aspartate--tRNA(Asp/Asn) ligase from Acinetobacter baylyi (strain ATCC 33305 / BD413 / ADP1).